The sequence spans 823 residues: Leucine--tRNA ligase (823 aa).

Residues 42–52 (PYPSGTLHMGH) carry the 'HIGH' region motif. A 'KMSKS' region motif is present at residues 575–579 (KMSKS). Lys578 is an ATP binding site.

The protein belongs to the class-I aminoacyl-tRNA synthetase family.

The protein localises to the cytoplasm. The enzyme catalyses tRNA(Leu) + L-leucine + ATP = L-leucyl-tRNA(Leu) + AMP + diphosphate. The polypeptide is Leucine--tRNA ligase (Legionella pneumophila (strain Corby)).